A 119-amino-acid polypeptide reads, in one-letter code: Large ribosomal subunit protein bL20 (119 aa).

This sequence belongs to the bacterial ribosomal protein bL20 family.

In terms of biological role, binds directly to 23S ribosomal RNA and is necessary for the in vitro assembly process of the 50S ribosomal subunit. It is not involved in the protein synthesizing functions of that subunit. This Dechloromonas aromatica (strain RCB) protein is Large ribosomal subunit protein bL20.